A 147-amino-acid chain; its full sequence is uncharacterized protein (147 aa).

Residues 69–89 (IFFFLSLYLSSIKIPMLILNI) form a helical membrane-spanning segment.

Its subcellular location is the membrane. This is an uncharacterized protein from Saccharomyces cerevisiae (strain ATCC 204508 / S288c) (Baker's yeast).